The sequence spans 151 residues: D-aminoacyl-tRNA deacylase (151 aa).

Positions 137-138 match the Gly-cisPro motif, important for rejection of L-amino acids motif; it reads GP.

The protein belongs to the DTD family. As to quaternary structure, homodimer.

It localises to the cytoplasm. The catalysed reaction is glycyl-tRNA(Ala) + H2O = tRNA(Ala) + glycine + H(+). It carries out the reaction a D-aminoacyl-tRNA + H2O = a tRNA + a D-alpha-amino acid + H(+). In terms of biological role, an aminoacyl-tRNA editing enzyme that deacylates mischarged D-aminoacyl-tRNAs. Also deacylates mischarged glycyl-tRNA(Ala), protecting cells against glycine mischarging by AlaRS. Acts via tRNA-based rather than protein-based catalysis; rejects L-amino acids rather than detecting D-amino acids in the active site. By recycling D-aminoacyl-tRNA to D-amino acids and free tRNA molecules, this enzyme counteracts the toxicity associated with the formation of D-aminoacyl-tRNA entities in vivo and helps enforce protein L-homochirality. The protein is D-aminoacyl-tRNA deacylase of Fusobacterium nucleatum subsp. nucleatum (strain ATCC 25586 / DSM 15643 / BCRC 10681 / CIP 101130 / JCM 8532 / KCTC 2640 / LMG 13131 / VPI 4355).